Reading from the N-terminus, the 223-residue chain is 7-cyano-7-deazaguanine synthase (223 aa).

15-25 (FSGGQDSTTCL) provides a ligand contact to ATP. Residues C191, C200, C203, and C206 each contribute to the Zn(2+) site.

It belongs to the QueC family. In terms of assembly, homodimer. Zn(2+) serves as cofactor.

The enzyme catalyses 7-carboxy-7-deazaguanine + NH4(+) + ATP = 7-cyano-7-deazaguanine + ADP + phosphate + H2O + H(+). It functions in the pathway purine metabolism; 7-cyano-7-deazaguanine biosynthesis. Catalyzes the ATP-dependent conversion of 7-carboxy-7-deazaguanine (CDG) to 7-cyano-7-deazaguanine (preQ(0)). This chain is 7-cyano-7-deazaguanine synthase, found in Staphylococcus haemolyticus (strain JCSC1435).